We begin with the raw amino-acid sequence, 336 residues long: Phenylalanine--tRNA ligase alpha subunit (336 aa).

Residue E255 coordinates Mg(2+).

Belongs to the class-II aminoacyl-tRNA synthetase family. Phe-tRNA synthetase alpha subunit type 1 subfamily. Tetramer of two alpha and two beta subunits. Requires Mg(2+) as cofactor.

It is found in the cytoplasm. It carries out the reaction tRNA(Phe) + L-phenylalanine + ATP = L-phenylalanyl-tRNA(Phe) + AMP + diphosphate + H(+). This is Phenylalanine--tRNA ligase alpha subunit from Gemmatimonas aurantiaca (strain DSM 14586 / JCM 11422 / NBRC 100505 / T-27).